The following is a 95-amino-acid chain: Small ribosomal subunit protein bS18 (95 aa).

The protein belongs to the bacterial ribosomal protein bS18 family. As to quaternary structure, part of the 30S ribosomal subunit. Forms a tight heterodimer with protein bS6.

In terms of biological role, binds as a heterodimer with protein bS6 to the central domain of the 16S rRNA, where it helps stabilize the platform of the 30S subunit. The polypeptide is Small ribosomal subunit protein bS18 (Rickettsia africae (strain ESF-5)).